The following is a 283-amino-acid chain: Ribosome biogenesis GTPase A (283 aa).

Residues 14–178 enclose the CP-type G domain; that stretch reads RREVTEKLKL…LLDTPGILWP (165 aa). Residues 58-61, 86-87, 130-135, and glycine 174 contribute to the GTP site; these read NKAD, NS, and NVGKST.

Belongs to the TRAFAC class YlqF/YawG GTPase family. MTG1 subfamily. Interacts with ctc. Interacts with the immature 50S ribosome subunit. 2 molecules of rbgA bind to one 50S subunit.

The protein localises to the cytoplasm. Essential protein that is required for a late step of 50S ribosomal subunit assembly. Has GTPase activity that is stimulated by interaction with the immature 50S ribosome subunit. Binds to the 23S rRNA. Required for the association of ribosomal proteins rplP and rpmA with the large subunit. The chain is Ribosome biogenesis GTPase A from Bacillus licheniformis (strain ATCC 14580 / DSM 13 / JCM 2505 / CCUG 7422 / NBRC 12200 / NCIMB 9375 / NCTC 10341 / NRRL NRS-1264 / Gibson 46).